Consider the following 267-residue polypeptide: Collectin-11 (267 aa).

An N-terminal signal peptide occupies residues 1-21 (MKRALALMGLAFLCVLRAGAA). Residues 40-109 (GDAGEKGDKG…GPNGEPGIPC (70 aa)) are disordered. Basic and acidic residues-rich tracts occupy residues 41–50 (DAGEKGDKGA) and 62–71 (EKGDVGDKGQ). Residues 49 to 108 (GAPGRPGRVGPTGEKGDVGDKGQKGGVGRHGKIGPIGSKGEKGDSGDIGPPGPNGEPGIP) form the Collagen-like domain. Residues 110 to 144 (ECSQLRKAIGEMDNQVTQLTAELKFIKNAVAGVRE) adopt a coiled-coil conformation. The 117-residue stretch at 145 to 261 (TEQKMYLLVK…CHLTMHFLCE (117 aa)) folds into the C-type lectin domain. 2 disulfide bridges follow: cysteine 166–cysteine 260 and cysteine 238–cysteine 252. Position 196 (arginine 196) interacts with a carbohydrate. Ca(2+) contacts are provided by aspartate 203, glutamate 207, glutamate 228, asparagine 230, asparagine 231, aspartate 234, glutamate 236, and aspartate 237. An a carbohydrate-binding site is contributed by glutamate 236. Residues glutamate 240 and 248–250 (NDV) each bind a carbohydrate. Ca(2+)-binding residues include asparagine 248 and aspartate 249.

This sequence belongs to the COLEC10/COLEC11 family. Homotrimer; disulfide-linked. Interacts with MASP1; probably triggers the lectin pathway of complement.

The protein localises to the secreted. Lectin that plays a role in innate immunity, apoptosis and embryogenesis. Calcium-dependent lectin that binds self and non-self glycoproteins presenting high mannose oligosaccharides with at least one terminal alpha-1,2-linked mannose epitope. Primarily recognizes the terminal disaccharide of the glycan. Also recognizes a subset of fucosylated glycans and lipopolysaccharides. Plays a role in innate immunity through its ability to bind non-self sugars presented by microorganisms and to activate the complement through the recruitment of MAPS1. Also plays a role in apoptosis through its ability to bind in a calcium-independent manner the DNA present at the surface of apoptotic cells and to activate the complement in response to this binding. Finally, plays a role in development, probably serving as a guidance cue during the migration of neural crest cells and other cell types during embryogenesis. This is Collectin-11 (COLEC11) from Bos taurus (Bovine).